The following is a 117-amino-acid chain: Venom protein TxLP11 (117 aa).

A signal peptide spans 1-22 (MNTKTLIVVFLVCLLVSEVVLA).

In terms of processing, contains 4 disulfide bonds. In terms of tissue distribution, expressed by the venom gland.

The protein localises to the secreted. The protein is Venom protein TxLP11 of Lychas mucronatus (Chinese swimming scorpion).